A 69-amino-acid chain; its full sequence is Disintegrin EC6 subunit beta (69 aa).

Positions N1–K65 constitute a Disintegrin domain. 4 disulfides stabilise this stretch: C6–C29, C20–C26, C25–C50, and C38–C57. The Cell attachment site signature appears at R42 to D44.

Belongs to the venom metalloproteinase (M12B) family. P-II subfamily. P-IIe sub-subfamily. Heterodimer with subunit alpha; disulfide-linked. In terms of tissue distribution, expressed by the venom gland.

The protein resides in the secreted. Potently inhibits adhesion of alpha-4/beta-1 (ITGA4/ITGB1) and alpha-9/beta-1 (ITGA9/ITGB1) integrins to VCAM1, and adhesion of alpha-5/beta-1 (ITGA5/ITGB1) integrin to fibronectin. Has a much less effect on alpha-IIb/beta-3 (ITGA2B/ITGB3) integrin. Also potently inhibits neutrophil migration across TNF-alpha-activated human umbilical endothelial cells. The chain is Disintegrin EC6 subunit beta from Echis carinatus sochureki (Saw-scaled viper).